The chain runs to 484 residues: Monocarboxylate transporter 2 (484 aa).

Over methionine 1–aspartate 16 the chain is Cytoplasmic. The chain crosses the membrane as a helical span at residues glycine 17–phenylalanine 37. At proline 38–alanine 60 the chain is on the extracellular side. A helical transmembrane segment spans residues tryptophan 61–valine 81. Over asparagine 82–valine 90 the chain is Cytoplasmic. Residues isoleucine 91 to isoleucine 111 traverse the membrane as a helical segment. Over glutamate 112–threonine 116 the chain is Extracellular. Residues valine 117–glycine 137 traverse the membrane as a helical segment. Residues lysine 138–glycine 149 are Cytoplasmic-facing. The helical transmembrane segment at cysteine 150 to phenylalanine 170 threads the bilayer. The Extracellular portion of the chain corresponds to asparagine 171–glycine 174. A helical transmembrane segment spans residues tryptophan 175 to leucine 195. Topologically, residues methionine 196–glycine 245 are cytoplasmic. A helical transmembrane segment spans residues phenylalanine 246 to phenylalanine 266. The Extracellular segment spans residues leucine 267–serine 281. Residues alanine 282 to isoleucine 302 traverse the membrane as a helical segment. At alanine 303 to arginine 311 the chain is on the cytoplasmic side. The helical transmembrane segment at isoleucine 312–leucine 332 threads the bilayer. The Extracellular portion of the chain corresponds to alanine 333–serine 337. A helical transmembrane segment spans residues alanine 338–phenylalanine 358. Residues glutamate 359–serine 372 are Cytoplasmic-facing. The helical transmembrane segment at alanine 373–glycine 393 threads the bilayer. Residues lysine 394–leucine 405 are Extracellular-facing. Residues tyrosine 406–isoleucine 426 traverse the membrane as a helical segment. The Cytoplasmic portion of the chain corresponds to asparagine 427–isoleucine 484. Residues glutamate 438–isoleucine 484 form a disordered region. Composition is skewed to basic and acidic residues over residues alanine 449–threonine 465 and proline 475–isoleucine 484.

Belongs to the major facilitator superfamily. Monocarboxylate porter (TC 2.A.1.13) family. As to quaternary structure, homodimer. Interacts with GRID2IP. Interacts with EMB; interaction mediates SLC16A7 targeting to the plasma membrane. Interacts with isoform 2 of BSG. Detected in testis and in spermatozoa (at protein level).

The protein localises to the cell membrane. It localises to the cytoplasm. The protein resides in the basolateral cell membrane. The catalysed reaction is (S)-lactate(in) + H(+)(in) = (S)-lactate(out) + H(+)(out). It catalyses the reaction 3-methyl-2-oxobutanoate(out) + H(+)(out) = 3-methyl-2-oxobutanoate(in) + H(+)(in). It carries out the reaction acetoacetate(out) + H(+)(out) = acetoacetate(in) + H(+)(in). The enzyme catalyses (R)-3-hydroxybutanoate(out) + H(+)(out) = (R)-3-hydroxybutanoate(in) + H(+)(in). The catalysed reaction is 4-methyl-2-oxopentanoate(out) + H(+)(out) = 4-methyl-2-oxopentanoate(in) + H(+)(in). It catalyses the reaction pyruvate(out) + H(+)(out) = pyruvate(in) + H(+)(in). It carries out the reaction (S)-3-hydroxybutanoate(out) + H(+)(out) = (S)-3-hydroxybutanoate(in) + H(+)(in). Transport activity exhibits steep dependence on substrate concentration. Substrate concentration sensitivity of SLC16A7 arises from the strong inter-subunit cooperativity of the SLC16A7 dimer during transport. Inhibited by AR-C155858. In terms of biological role, proton-coupled monocarboxylate symporter. Catalyzes the rapid transport across the plasma membrane of monocarboxylates such as L-lactate, pyruvate and ketone bodies, acetoacetate, beta-hydroxybutyrate and acetate. Dimerization is functionally required and both subunits work cooperatively in transporting substrate. The protein is Monocarboxylate transporter 2 (Slc16a7) of Mus musculus (Mouse).